Here is a 278-residue protein sequence, read N- to C-terminus: 4-deoxy-L-threo-5-hexosulose-uronate ketol-isomerase (278 aa).

4 residues coordinate Zn(2+): histidine 196, histidine 198, glutamate 203, and histidine 245.

It belongs to the KduI family. Requires Zn(2+) as cofactor.

It catalyses the reaction 5-dehydro-4-deoxy-D-glucuronate = 3-deoxy-D-glycero-2,5-hexodiulosonate. Its pathway is glycan metabolism; pectin degradation; 2-dehydro-3-deoxy-D-gluconate from pectin: step 4/5. Functionally, catalyzes the isomerization of 5-dehydro-4-deoxy-D-glucuronate to 3-deoxy-D-glycero-2,5-hexodiulosonate. The polypeptide is 4-deoxy-L-threo-5-hexosulose-uronate ketol-isomerase (Enterobacter sp. (strain 638)).